An 83-amino-acid chain; its full sequence is Colicin-E5 immunity protein in ColE9 (83 aa).

The chain is Colicin-E5 immunity protein in ColE9 from Escherichia coli.